A 105-amino-acid chain; its full sequence is Met repressor (105 aa).

Belongs to the MetJ family. As to quaternary structure, homodimer.

Its subcellular location is the cytoplasm. In terms of biological role, this regulatory protein, when combined with SAM (S-adenosylmethionine) represses the expression of the methionine regulon and of enzymes involved in SAM synthesis. This Histophilus somni (strain 129Pt) (Haemophilus somnus) protein is Met repressor.